We begin with the raw amino-acid sequence, 231 residues long: PX domain-containing protein 1 (231 aa).

Positions 1–134 (MASAVFEGTS…TFFERSPLDQ (134 aa)) constitute a PX domain.

This chain is PX domain-containing protein 1 (PXDC1), found in Bos taurus (Bovine).